The sequence spans 251 residues: HTH-type transcriptional regulator UlaR (251 aa).

The region spanning 3–58 is the HTH deoR-type domain; that stretch reads EAQRHQILLEMLAQLGFVTVEKVVERLGISPATARRDINKLDESGKLKKVRNGAEA. A DNA-binding region (H-T-H motif) is located at residues 20-39; the sequence is VTVEKVVERLGISPATARRD.

Its subcellular location is the cytoplasm. Its function is as follows. Represses ulaG and the ulaABCDEF operon. The polypeptide is HTH-type transcriptional regulator UlaR (Escherichia coli (strain SMS-3-5 / SECEC)).